The sequence spans 119 residues: Large ribosomal subunit protein uL22 (119 aa).

This sequence belongs to the universal ribosomal protein uL22 family. Part of the 50S ribosomal subunit.

This protein binds specifically to 23S rRNA; its binding is stimulated by other ribosomal proteins, e.g. L4, L17, and L20. It is important during the early stages of 50S assembly. It makes multiple contacts with different domains of the 23S rRNA in the assembled 50S subunit and ribosome. In terms of biological role, the globular domain of the protein is located near the polypeptide exit tunnel on the outside of the subunit, while an extended beta-hairpin is found that lines the wall of the exit tunnel in the center of the 70S ribosome. The chain is Large ribosomal subunit protein uL22 from Microcystis aeruginosa (strain NIES-843 / IAM M-2473).